A 242-amino-acid chain; its full sequence is Sec-independent protein translocase protein TatCd (242 aa).

3 consecutive transmembrane segments (helical) span residues 19–39, 60–80, and 107–127; these read IIVTLAAFFLFLITAFLFVQD, ILWVYMMLSGICAIAASIPVA, and LFALFLAGISFGYFVLFPIVL. The segment at 128 to 149 is interaction with TatAd; sequence SFLTHLSSGHFETMFTADRYFR. Residues 150–170 traverse the membrane as a helical segment; the sequence is FMVNLSLPFGFLFEMPLVVMF. Residues 171 to 187 are interaction with TatAd; that stretch reads LTRLGILNPYRLAKARK. 2 helical membrane-spanning segments follow: residues 188 to 208 and 209 to 229; these read LSYFLLIVVSILITPPDFISD and FLVMIPLLVLFEVSVTLSAFV.

This sequence belongs to the TatC family. In terms of assembly, forms a complex with TatAd. Two types of complexes exist: one composed of TatAd and TatCd, and another composed only of TatAd.

The protein resides in the cell membrane. Its function is as follows. Part of the twin-arginine translocation (Tat) system that transports large folded proteins containing a characteristic twin-arginine motif in their signal peptide across membranes. Required for PhoD secretion. TatCd promotes membrane localization of TatAd via domain specific interactions. TatCd is required for stabile production of TatAd as well as for its maintenance. The polypeptide is Sec-independent protein translocase protein TatCd (Bacillus subtilis (strain 168)).